Consider the following 287-residue polypeptide: ATP synthase gamma chain (287 aa).

It belongs to the ATPase gamma chain family. F-type ATPases have 2 components, CF(1) - the catalytic core - and CF(0) - the membrane proton channel. CF(1) has five subunits: alpha(3), beta(3), gamma(1), delta(1), epsilon(1). CF(0) has three main subunits: a, b and c.

The protein resides in the cell inner membrane. Functionally, produces ATP from ADP in the presence of a proton gradient across the membrane. The gamma chain is believed to be important in regulating ATPase activity and the flow of protons through the CF(0) complex. The sequence is that of ATP synthase gamma chain from Colwellia psychrerythraea (strain 34H / ATCC BAA-681) (Vibrio psychroerythus).